The chain runs to 708 residues: MQAIIKEFQLGQHTVTLETGAIARQADGAVLASIGDTSVLVTVVGKREAQPGQDFFPLTVNYQERMYAAGRIPGGFLKREGRPNDGETLIARLIDRPIRPLFPSGFVNEVQVIATVVSVNPEIQPDMVALIGTSAALAISGIPFSGPIGATRVGYIDGEYVLNPTLKELEESKLDLVVAGTDNAVLMVESEADVLAEDIMLGAVVYGHEQAQAIITAIKEFKAEAGKPTWDWTAPAKNVSLEEKVASIAADKVGEAYRITDKVARKEALGVAKDEVVAVLTSELAEGESLDKQEIGKIFGSLEKKIVRGRIAAGEKRIDGREPDMIRALDVMTGVLPRTHGSAIFTRGETQALVTATLGTERDSQLIDDLTGTHKNHFMLNYNFPPFCVGETGFVGSPKRREIGHGNLAKRGIAAVMPTLTEFPYSIRVVSEITESNGSSSMASVCGTSLALMNAGVPIKASVAGIAMGLVKEDDKFVVLSDILGDEDHLGDMDFKVAGTAGGITALQMDIKIEGITQEIMQIALKQAKAARLHILEVMDKAISAPSEELSQFAPRIYTMKIPQKKIAEVIGKGGATIRQLTEETGTTIEIGDDGTIKIAATDGESAANAISRIEQLTAELEVGTIYEGKVVRIVDFGAFVNILPGKDGLVHISQISTERVNNVTDHLSEGQEVKVKVLEVDRQGRVRLSIKEAMESAAPAADAPTDA.

Residues Asp-488 and Asp-494 each coordinate Mg(2+). Residues 555–614 (PRIYTMKIPQKKIAEVIGKGGATIRQLTEETGTTIEIGDDGTIKIAATDGESAANAISRI) form the KH domain. In terms of domain architecture, S1 motif spans 624 to 692 (GTIYEGKVVR…RQGRVRLSIK (69 aa)).

The protein belongs to the polyribonucleotide nucleotidyltransferase family. As to quaternary structure, component of the RNA degradosome, which is a multiprotein complex involved in RNA processing and mRNA degradation. Mg(2+) serves as cofactor.

It is found in the cytoplasm. The enzyme catalyses RNA(n+1) + phosphate = RNA(n) + a ribonucleoside 5'-diphosphate. Its function is as follows. Involved in mRNA degradation. Catalyzes the phosphorolysis of single-stranded polyribonucleotides processively in the 3'- to 5'-direction. The chain is Polyribonucleotide nucleotidyltransferase from Pseudoalteromonas translucida (strain TAC 125).